Here is a 415-residue protein sequence, read N- to C-terminus: MRLSLTKVVNGCRLGKIINLGKTGDHTMDIPGCLLYTKTGSAPHLTHHTLHNIHGVPAMAQLTLSSLAEHHEVLREYKEGVGKFIGMPESLLYCSLHDPVSPCPAGYVTNKSVSVWSVAGRVEMTVSKFMAIQQALQPDWFQCLSDGEVSCKEATSIKRVRKSVDRSLLFLDNCLRLQEESEVLQKSVIIGVIEGGDVMEERLRSARETAKRPVGGFLLDGFQGNPTTLETRLRLLSSVTAELPEDKPRLISGVSRPDEVLECIERGVDLFESFFPYQVTERGCALTFSFDYQPNPEETLLQQNGTQEEIKCMDQIKKMETTGCNQEITSFEINLKEKKYQEDFNPLVRGCSCYCCKNHTRAYIHHLLVTNELLAGVLLMMHNFEHYFGFFHYIREALKSDKLAQLKELIHRQAS.

Cysteine 351, cysteine 353, cysteine 356, and histidine 382 together coordinate Zn(2+).

Belongs to the queuine tRNA-ribosyltransferase family. QTRT2 subfamily. As to quaternary structure, heterodimer of a catalytic subunit QTRT1 and an accessory subunit QTRT2. It depends on Zn(2+) as a cofactor.

The protein resides in the cytoplasm. Its subcellular location is the mitochondrion outer membrane. In terms of biological role, non-catalytic subunit of the queuine tRNA-ribosyltransferase (TGT) that catalyzes the base-exchange of a guanine (G) residue with queuine (Q) at position 34 (anticodon wobble position) in tRNAs with GU(N) anticodons (tRNA-Asp, -Asn, -His and -Tyr), resulting in the hypermodified nucleoside queuosine (7-(((4,5-cis-dihydroxy-2-cyclopenten-1-yl)amino)methyl)-7-deazaguanosine). The protein is Queuine tRNA-ribosyltransferase accessory subunit 2 of Pongo abelii (Sumatran orangutan).